The sequence spans 463 residues: Fumarate hydratase class II (463 aa).

Substrate-binding positions include 97-99 (SGT), R125, 128-131 (HPND), 138-140 (SSN), and T186. Over residues 121–134 (RGEGRKVHPNDHVN) the composition is skewed to basic and acidic residues. A disordered region spans residues 121–142 (RGEGRKVHPNDHVNRGQSSNDT). H187 serves as the catalytic Proton donor/acceptor. S317 is a catalytic residue. Substrate-binding positions include S318 and 323–325 (KVN).

The protein belongs to the class-II fumarase/aspartase family. Fumarase subfamily. In terms of assembly, homotetramer.

The protein resides in the cytoplasm. It catalyses the reaction (S)-malate = fumarate + H2O. It participates in carbohydrate metabolism; tricarboxylic acid cycle; (S)-malate from fumarate: step 1/1. Involved in the TCA cycle. Catalyzes the stereospecific interconversion of fumarate to L-malate. The chain is Fumarate hydratase class II from Bordetella bronchiseptica (strain ATCC BAA-588 / NCTC 13252 / RB50) (Alcaligenes bronchisepticus).